Here is a 326-residue protein sequence, read N- to C-terminus: GDP-mannose transporter (326 aa).

Residues 1–4 (MEKS) lie on the Cytoplasmic side of the membrane. The helical transmembrane segment at 5–25 (ITNSPVLSILSYCAASILMTV) threads the bilayer. Residues 26-35 (TNKYVLSGTS) lie on the Lumenal side of the membrane. A helical transmembrane segment spans residues 36 to 56 (FNLNLALLAVQSIVCLTAISI). The Cytoplasmic portion of the chain corresponds to 57–74 (GKSFGLCKFRSFNADEAK). A helical membrane pass occupies residues 75 to 97 (KWFPIALLLVVMIYTSSKALQFL). Residues 98 to 100 (SIP) lie on the Lumenal side of the membrane. Residues 101 to 123 (VYTIFKNLTIILIAYGEVLWFGG) form a helical membrane-spanning segment. The Cytoplasmic segment spans residues 124–129 (SVTSMA). A helical transmembrane segment spans residues 130–152 (LASFVLMVLSSVIAAWSDISGAI). The Lumenal portion of the chain corresponds to 153-163 (AVSGSATTTVT). Residues 164 to 184 (ALNIGYFWMMSNCFASAAFVL) traverse the membrane as a helical segment. Topologically, residues 185 to 208 (YMRKRIKLTNFGDFDTTFYNNLLS) are cytoplasmic. A helical membrane pass occupies residues 209 to 229 (IPVLLIASLLFEDWSPANLAV). Residues 230–237 (NFPPESRN) are Lumenal-facing. The chain crosses the membrane as a helical span at residues 238-258 (LIFFSMVVSGLMSIGISYCSA). Residues 259 to 268 (WCVRVTSSTT) lie on the Cytoplasmic side of the membrane. A helical membrane pass occupies residues 269-289 (YSMVGALNKLPLALSGIVFFG). At 290–291 (TP) the chain is on the lumenal side. The chain crosses the membrane as a helical span at residues 292–312 (ATFSSVSAIFVGFVAGIVYAV). At 313-326 (AQIQKKKAEAALPK) the chain is on the cytoplasmic side.

Belongs to the TPT transporter family. SLC35D subfamily. Homooligomer.

The protein resides in the golgi apparatus membrane. The protein localises to the cytoplasmic vesicle membrane. Its subcellular location is the endoplasmic reticulum membrane. Its function is as follows. Involved in the import of GDP-mannose from the cytoplasm into the Golgi lumen. This chain is GDP-mannose transporter (VRG4), found in Yarrowia lipolytica (strain CLIB 122 / E 150) (Yeast).